A 184-amino-acid polypeptide reads, in one-letter code: ATP synthase subunit b, chloroplastic (184 aa).

A helical membrane pass occupies residues 27–49 (LATNPINLSVVLGVLIFFGKGVL).

This sequence belongs to the ATPase B chain family. As to quaternary structure, F-type ATPases have 2 components, F(1) - the catalytic core - and F(0) - the membrane proton channel. F(1) has five subunits: alpha(3), beta(3), gamma(1), delta(1), epsilon(1). F(0) has four main subunits: a(1), b(1), b'(1) and c(10-14). The alpha and beta chains form an alternating ring which encloses part of the gamma chain. F(1) is attached to F(0) by a central stalk formed by the gamma and epsilon chains, while a peripheral stalk is formed by the delta, b and b' chains.

It localises to the plastid. It is found in the chloroplast thylakoid membrane. F(1)F(0) ATP synthase produces ATP from ADP in the presence of a proton or sodium gradient. F-type ATPases consist of two structural domains, F(1) containing the extramembraneous catalytic core and F(0) containing the membrane proton channel, linked together by a central stalk and a peripheral stalk. During catalysis, ATP synthesis in the catalytic domain of F(1) is coupled via a rotary mechanism of the central stalk subunits to proton translocation. Functionally, component of the F(0) channel, it forms part of the peripheral stalk, linking F(1) to F(0). The chain is ATP synthase subunit b, chloroplastic from Eucalyptus globulus subsp. globulus (Tasmanian blue gum).